Here is a 607-residue protein sequence, read N- to C-terminus: MSVMAATAVVSPQAEASESWYLALLGFAEHFRTSSPPKIRLCVHCLQAVFQFKPPQRIEARTHLQLGSVLYHHTKNSELARQHLEKAWFISQQIPQFEDVKFEAASLLSELYCQENSVDAAKPLLRKAIQISQQTPYWHCRLLFQLAQLHTLEKDLVSACDLLGVGAEYARVVGSEYTRALFLLSKGMLLLMERKLQEVHPLLTLCGQIVENWQGNPIQKESLRVFFLVLQVTHYLDAGQVKSVKPCLKQLQQCIQTISTLHDDEILPSNPADLFHWLPKEHMCVLVYLVTVMHSMQAGYLEKAQKYTDKALMQLEKLKMLDSSPILSSFQVILLEHIIMCRLVTGHKATALQEISQLCQLCQQSPRLFSNHAAQLHTLLGLYCISVNCMDNAEAQFTTALRLTTHQELWTFIVTNLASVYIREGNRHQELYALLERINPDHNFPVSSHCLRAAAFYIRGLFSFFQGRYNEAKRFLRETLKMSNAEDLNRLTACSLVLLGHIFYVLGNHRESNNMVVPAMQLASKIPDMSVQLWSSALLRDLNKACGNNIDAHEAAQMHQNFSQQLLQDHIEACSLPEHNLITWTDGSPPVQFQAQNGPTTSLASLL.

TPR repeat units lie at residues 102 to 135, 374 to 407, 453 to 486, and 493 to 526; these read FEAA…SQQT, AQLH…TTHQ, AAAF…SNAE, and ACSL…ASKI.

This sequence belongs to the SCC4/mau-2 family. As to quaternary structure, interacts with one or more paralogs of nipbl to form the cohesin loading complex.

The protein localises to the nucleus. It localises to the nucleoplasm. Functionally, plays an important role in the loading of the cohesin complex on to DNA. Plays a role in sister chromatid cohesion and normal progression through prometaphase. This chain is MAU2 chromatid cohesion factor homolog (mau2), found in Xenopus laevis (African clawed frog).